The primary structure comprises 424 residues: Serine--tRNA ligase (424 aa).

Position 231 to 233 (231 to 233 (TAE)) interacts with L-serine. 262–264 (RAE) contributes to the ATP binding site. Glu-285 is a binding site for L-serine. Residue 349–352 (EISS) coordinates ATP. Residue Ser-385 participates in L-serine binding.

It belongs to the class-II aminoacyl-tRNA synthetase family. Type-1 seryl-tRNA synthetase subfamily. Homodimer. The tRNA molecule binds across the dimer.

It localises to the cytoplasm. It carries out the reaction tRNA(Ser) + L-serine + ATP = L-seryl-tRNA(Ser) + AMP + diphosphate + H(+). It catalyses the reaction tRNA(Sec) + L-serine + ATP = L-seryl-tRNA(Sec) + AMP + diphosphate + H(+). Its pathway is aminoacyl-tRNA biosynthesis; selenocysteinyl-tRNA(Sec) biosynthesis; L-seryl-tRNA(Sec) from L-serine and tRNA(Sec): step 1/1. Its function is as follows. Catalyzes the attachment of serine to tRNA(Ser). Is also able to aminoacylate tRNA(Sec) with serine, to form the misacylated tRNA L-seryl-tRNA(Sec), which will be further converted into selenocysteinyl-tRNA(Sec). In Geobacillus sp. (strain WCH70), this protein is Serine--tRNA ligase.